Here is a 253-residue protein sequence, read N- to C-terminus: MSSFAKRIIPCLDVDNGRVVKGVNFVGLRDAGDPVEVAKRYNSEGADEITFLDITASHENRGTIVDIVKKVAQEVFIPLTVGGGIRKLEDIYSLLNVGCDKVSINSSAVTNPNLINESSKRFGSQCIVVAIDVKRVADGSYHVFVKGGREDTGLDALSWAKEVYDRGAGEILLTSMDTDGAKTGFELNITRQVSNLVDIPVIASGGAGSMEHIKEAFENGASAALAASIFHFKEIDIMDLKKYLRANNIPVRI.

Residues D13 and D132 contribute to the active site.

Belongs to the HisA/HisF family. As to quaternary structure, heterodimer of HisH and HisF.

Its subcellular location is the cytoplasm. It carries out the reaction 5-[(5-phospho-1-deoxy-D-ribulos-1-ylimino)methylamino]-1-(5-phospho-beta-D-ribosyl)imidazole-4-carboxamide + L-glutamine = D-erythro-1-(imidazol-4-yl)glycerol 3-phosphate + 5-amino-1-(5-phospho-beta-D-ribosyl)imidazole-4-carboxamide + L-glutamate + H(+). The protein operates within amino-acid biosynthesis; L-histidine biosynthesis; L-histidine from 5-phospho-alpha-D-ribose 1-diphosphate: step 5/9. Its function is as follows. IGPS catalyzes the conversion of PRFAR and glutamine to IGP, AICAR and glutamate. The HisF subunit catalyzes the cyclization activity that produces IGP and AICAR from PRFAR using the ammonia provided by the HisH subunit. The chain is Imidazole glycerol phosphate synthase subunit HisF from Aliarcobacter butzleri (strain RM4018) (Arcobacter butzleri).